Here is a 425-residue protein sequence, read N- to C-terminus: Gamma-glutamyl phosphate reductase (425 aa).

This sequence belongs to the gamma-glutamyl phosphate reductase family.

It localises to the cytoplasm. It carries out the reaction L-glutamate 5-semialdehyde + phosphate + NADP(+) = L-glutamyl 5-phosphate + NADPH + H(+). It functions in the pathway amino-acid biosynthesis; L-proline biosynthesis; L-glutamate 5-semialdehyde from L-glutamate: step 2/2. Catalyzes the NADPH-dependent reduction of L-glutamate 5-phosphate into L-glutamate 5-semialdehyde and phosphate. The product spontaneously undergoes cyclization to form 1-pyrroline-5-carboxylate. This is Gamma-glutamyl phosphate reductase from Xylella fastidiosa (strain M23).